The primary structure comprises 207 residues: ATP-dependent Clp protease proteolytic subunit (207 aa).

The Nucleophile role is filled by Ser111. The active site involves His136.

The protein belongs to the peptidase S14 family. As to quaternary structure, fourteen ClpP subunits assemble into 2 heptameric rings which stack back to back to give a disk-like structure with a central cavity, resembling the structure of eukaryotic proteasomes.

It localises to the cytoplasm. It carries out the reaction Hydrolysis of proteins to small peptides in the presence of ATP and magnesium. alpha-casein is the usual test substrate. In the absence of ATP, only oligopeptides shorter than five residues are hydrolyzed (such as succinyl-Leu-Tyr-|-NHMec, and Leu-Tyr-Leu-|-Tyr-Trp, in which cleavage of the -Tyr-|-Leu- and -Tyr-|-Trp bonds also occurs).. In terms of biological role, cleaves peptides in various proteins in a process that requires ATP hydrolysis. Has a chymotrypsin-like activity. Plays a major role in the degradation of misfolded proteins. This Proteus mirabilis (strain HI4320) protein is ATP-dependent Clp protease proteolytic subunit.